The chain runs to 364 residues: Alanine racemase (364 aa).

K35 acts as the Proton acceptor; specific for D-alanine in catalysis. The residue at position 35 (K35) is an N6-(pyridoxal phosphate)lysine. R130 contacts substrate. Residue Y256 is the Proton acceptor; specific for L-alanine of the active site. M304 lines the substrate pocket.

Belongs to the alanine racemase family. Pyridoxal 5'-phosphate serves as cofactor.

The catalysed reaction is L-alanine = D-alanine. The protein operates within amino-acid biosynthesis; D-alanine biosynthesis; D-alanine from L-alanine: step 1/1. Functionally, catalyzes the interconversion of L-alanine and D-alanine. May also act on other amino acids. In Polaromonas sp. (strain JS666 / ATCC BAA-500), this protein is Alanine racemase (alr).